The sequence spans 268 residues: Calpain small subunit 1 (268 aa).

An N-acetylmethionine modification is found at M1. Residue S6 is modified to Phosphoserine. An EF-hand 1; atypical domain is found at 91-125 (EANESEEVRQFRRLFAQLAGDDMEVSATELMNILN). Residues A109, D112, E114, E119, D137, D152, D154, T156, K158, and E163 each coordinate Ca(2+). EF-hand domains are found at residues 139–172 (FGID…NNIK), 169–204 (NNIK…AGFH), 205–233 (LNEH…ISCL), and 234–268 (VRLD…TMYS). Position 179 is an N6-acetyllysine (K179). D182, D184, S186, T188, E193, and D225 together coordinate Ca(2+).

Homodimer or heterodimer of a large (catalytic) and a small (regulatory) subunit. In presence of calcium, the heterodimer dissociates.

It localises to the cytoplasm. Its subcellular location is the cell membrane. In terms of biological role, regulatory subunit of the calcium-regulated non-lysosomal thiol-protease which catalyzes limited proteolysis of substrates involved in cytoskeletal remodeling and signal transduction. Essential for embryonic development. In Homo sapiens (Human), this protein is Calpain small subunit 1 (CAPNS1).